The following is a 369-amino-acid chain: MRAGIENYIKNIEQSLELIWRSLDIESLTIRLTELEELTADPSLWNNNANAQILLREKTNIEEKLNVFNNLKSNFEDILELEAMAEVENDFETLNQIEQDFKKLSIIAAKLETECLFSDESDYNNCFLEINAGAGGTESHDWASIMMRMYLRFAERLGFKTQIINMINGEEVGIKSCTIRIIGKRAYGWFKTEAGVHRLVRISPFNAAGKRMTSFASSWVYPEIDDDIAITIEDKDLRIDTFRASGAGGQHVNTTDSAVRITHIPTNTVTQCQSDRSQHKNKAQAMKMLQAKLYKLEMQKRTDSVDKQNANKTDNSWGHQIRSYVLQPYQIVKDLRTDYETSDTKGVLDGNLENFVSASLAMNASGNKK.

Gln-250 carries the N5-methylglutamine modification.

The protein belongs to the prokaryotic/mitochondrial release factor family. Methylated by PrmC. Methylation increases the termination efficiency of RF2.

It localises to the cytoplasm. Its function is as follows. Peptide chain release factor 2 directs the termination of translation in response to the peptide chain termination codons UGA and UAA. In Rickettsia typhi (strain ATCC VR-144 / Wilmington), this protein is Peptide chain release factor 2 (prfB).